We begin with the raw amino-acid sequence, 162 residues long: UPF0305 protein MmarC5_0909 (162 aa).

Belongs to the UPF0305 family.

The polypeptide is UPF0305 protein MmarC5_0909 (Methanococcus maripaludis (strain C5 / ATCC BAA-1333)).